The primary structure comprises 91 residues: Cell division protein FtsB (91 aa).

The Cytoplasmic portion of the chain corresponds to 1-3; the sequence is MKW. Residues 4–21 traverse the membrane as a helical segment; the sequence is LVAVLVVFVAMFQYRLWV. Residues 22–91 are Periplasmic-facing; that stretch reads GEGSIADVVR…ETFFMIIDDQ (70 aa). Residues 23-63 are a coiled coil; that stretch reads EGSIADVVRLEREIARQEADNERLRERNKQLAAEVDALKTG.

The protein belongs to the FtsB family. In terms of assembly, part of a complex composed of FtsB, FtsL and FtsQ.

The protein resides in the cell inner membrane. Functionally, essential cell division protein. May link together the upstream cell division proteins, which are predominantly cytoplasmic, with the downstream cell division proteins, which are predominantly periplasmic. The sequence is that of Cell division protein FtsB from Teredinibacter turnerae (strain ATCC 39867 / T7901).